Consider the following 385-residue polypeptide: Probable nitrate transporter NarT (385 aa).

The next 12 membrane-spanning stretches (helical) occupy residues 14-34 (TLSLVVGFMAWSIISPLMPYI), 47-67 (IILAIPVILGSILRVPFGYLT), 69-89 (IIGAKWVFFCSFVILLFPIFF), 97-117 (GMLMLSGFFLGVGGAIFSVGV), 139-159 (GNIGTAVSSFLAPPIAGIIGW), 161-181 (TTVRSYLIIIAIFAILMFIFG), 205-225 (LYYLSLWYFITFGAFVAFGLF), 246-266 (GVFIALATFLRPIGGILGDKF), 277-297 (IIMIVGAVILGISSHIALFTI), 302-322 (ISICAGLGNGLIFKLVPSYFA), 330-350 (GIVSMMGGLGGFFPPLVITYV), and 359-379 (LAFILLAIFGVLAFITMGHLY).

The protein belongs to the major facilitator superfamily. Nitrate/nitrite porter (TC 2.A.1.8) family.

It is found in the cell membrane. In terms of biological role, probably required for nitrate uptake under anoxic conditions. Also possibly involved in excretion of nitrite produced by the dissimilatory reduction of nitrate. This Staphylococcus haemolyticus (strain JCSC1435) protein is Probable nitrate transporter NarT (narT).